The sequence spans 101 residues: NAD(P)H-quinone oxidoreductase subunit 4L, chloroplastic (101 aa).

3 helical membrane passes run 2 to 22 (MLEHVLVLSAYLFSIGIYGLI), 32 to 52 (MCLELILNAVNINFVTFSDFF), and 61 to 81 (IFSIFVIAIAAAEAAIGSAIV).

This sequence belongs to the complex I subunit 4L family. As to quaternary structure, NDH is composed of at least 16 different subunits, 5 of which are encoded in the nucleus.

It is found in the plastid. Its subcellular location is the chloroplast thylakoid membrane. It carries out the reaction a plastoquinone + NADH + (n+1) H(+)(in) = a plastoquinol + NAD(+) + n H(+)(out). The enzyme catalyses a plastoquinone + NADPH + (n+1) H(+)(in) = a plastoquinol + NADP(+) + n H(+)(out). NDH shuttles electrons from NAD(P)H:plastoquinone, via FMN and iron-sulfur (Fe-S) centers, to quinones in the photosynthetic chain and possibly in a chloroplast respiratory chain. The immediate electron acceptor for the enzyme in this species is believed to be plastoquinone. Couples the redox reaction to proton translocation, and thus conserves the redox energy in a proton gradient. In Citrus sinensis (Sweet orange), this protein is NAD(P)H-quinone oxidoreductase subunit 4L, chloroplastic.